Here is a 309-residue protein sequence, read N- to C-terminus: Homoserine O-succinyltransferase (309 aa).

Catalysis depends on Cys142, which acts as the Acyl-thioester intermediate. Substrate-binding residues include Lys163 and Ser192. His235 serves as the catalytic Proton acceptor. Residue Glu237 is part of the active site. Residue Arg249 participates in substrate binding.

Belongs to the MetA family. Homodimer.

The protein resides in the cytoplasm. The enzyme catalyses L-homoserine + succinyl-CoA = O-succinyl-L-homoserine + CoA. Its pathway is amino-acid biosynthesis; L-methionine biosynthesis via de novo pathway; O-succinyl-L-homoserine from L-homoserine: step 1/1. Its function is as follows. Transfers a succinyl group from succinyl-CoA to L-homoserine, forming succinyl-L-homoserine. The sequence is that of Homoserine O-succinyltransferase from Escherichia coli O139:H28 (strain E24377A / ETEC).